The sequence spans 455 residues: Probable carboxypeptidase MCYG_07204 (455 aa).

The N-terminal stretch at 1–21 (MQKTYLLALLVSSLASVRSLA) is a signal peptide. N93 is a glycosylation site (N-linked (GlcNAc...) asparagine). Zn(2+) is bound at residue D170. E202 functions as the Proton acceptor in the catalytic mechanism. Position 203 (E203) interacts with Zn(2+). N390 carries an N-linked (GlcNAc...) asparagine glycan.

It belongs to the peptidase M20A family. The cofactor is Zn(2+).

The protein localises to the secreted. The polypeptide is Probable carboxypeptidase MCYG_07204 (Arthroderma otae (strain ATCC MYA-4605 / CBS 113480) (Microsporum canis)).